An 87-amino-acid polypeptide reads, in one-letter code: Small ribosomal subunit protein uS17 (87 aa).

It belongs to the universal ribosomal protein uS17 family. In terms of assembly, part of the 30S ribosomal subunit.

One of the primary rRNA binding proteins, it binds specifically to the 5'-end of 16S ribosomal RNA. The protein is Small ribosomal subunit protein uS17 of Bacillus subtilis (strain 168).